A 317-amino-acid polypeptide reads, in one-letter code: 4-hydroxy-3-methylbut-2-enyl diphosphate reductase (317 aa).

Cys12 provides a ligand contact to [4Fe-4S] cluster. Residues His41 and His74 each contribute to the (2E)-4-hydroxy-3-methylbut-2-enyl diphosphate site. Dimethylallyl diphosphate-binding residues include His41 and His74. Residues His41 and His74 each coordinate isopentenyl diphosphate. Cys97 serves as a coordination point for [4Fe-4S] cluster. His125 is a binding site for (2E)-4-hydroxy-3-methylbut-2-enyl diphosphate. His125 contacts dimethylallyl diphosphate. Residue His125 participates in isopentenyl diphosphate binding. The Proton donor role is filled by Glu127. Thr168 is a binding site for (2E)-4-hydroxy-3-methylbut-2-enyl diphosphate. Residue Cys198 coordinates [4Fe-4S] cluster. 4 residues coordinate (2E)-4-hydroxy-3-methylbut-2-enyl diphosphate: Ser226, Ser227, Asn228, and Ser270. Positions 226, 227, 228, and 270 each coordinate dimethylallyl diphosphate. Isopentenyl diphosphate contacts are provided by Ser226, Ser227, Asn228, and Ser270.

It belongs to the IspH family. Homodimer. [4Fe-4S] cluster serves as cofactor.

The catalysed reaction is isopentenyl diphosphate + 2 oxidized [2Fe-2S]-[ferredoxin] + H2O = (2E)-4-hydroxy-3-methylbut-2-enyl diphosphate + 2 reduced [2Fe-2S]-[ferredoxin] + 2 H(+). It catalyses the reaction dimethylallyl diphosphate + 2 oxidized [2Fe-2S]-[ferredoxin] + H2O = (2E)-4-hydroxy-3-methylbut-2-enyl diphosphate + 2 reduced [2Fe-2S]-[ferredoxin] + 2 H(+). Its pathway is isoprenoid biosynthesis; dimethylallyl diphosphate biosynthesis; dimethylallyl diphosphate from (2E)-4-hydroxy-3-methylbutenyl diphosphate: step 1/1. It participates in isoprenoid biosynthesis; isopentenyl diphosphate biosynthesis via DXP pathway; isopentenyl diphosphate from 1-deoxy-D-xylulose 5-phosphate: step 6/6. Functionally, catalyzes the conversion of 1-hydroxy-2-methyl-2-(E)-butenyl 4-diphosphate (HMBPP) into a mixture of isopentenyl diphosphate (IPP) and dimethylallyl diphosphate (DMAPP). Acts in the terminal step of the DOXP/MEP pathway for isoprenoid precursor biosynthesis. The protein is 4-hydroxy-3-methylbut-2-enyl diphosphate reductase of Yersinia pseudotuberculosis serotype IB (strain PB1/+).